Consider the following 263-residue polypeptide: Protein PUN1 (263 aa).

At 1 to 6 (MRNFFT) the chain is on the cytoplasmic side. A helical transmembrane segment spans residues 7–27 (LFFAAIFSLGALILAIVACAG). Residues 28 to 143 (STKNYSPINK…MTYYNNLVKC (116 aa)) lie on the Extracellular side of the membrane. Asn100 carries N-linked (GlcNAc...) asparagine glycosylation. The chain crosses the membrane as a helical span at residues 144 to 164 (MFITILIGIVLTFVNLVFNVL). Topologically, residues 165 to 172 (RWIIHIRP) are cytoplasmic. The chain crosses the membrane as a helical span at residues 173–193 (LTWFGAFFSFFAFAALLVSIG). Topologically, residues 194-223 (SCLGTYSYIKYILKHNYSDYGISMSIGRNY) are extracellular. Residue Asn209 is glycosylated (N-linked (GlcNAc...) asparagine). Residues 224 to 244 (QGLMWGAVVGALLNFILWCSV) traverse the membrane as a helical segment. Over 245–263 (RSRPTVIYANAPIEEKPLI) the chain is Cytoplasmic. Lys260 is covalently cross-linked (Glycyl lysine isopeptide (Lys-Gly) (interchain with G-Cter in ubiquitin)).

The protein belongs to the SUR7 family. Post-translationally, N-glycosylated.

The protein resides in the cell membrane. Contributes to the wild-type cellular response to nitrogen stress through signaling pathways that regulate the expression of genes involved in amino acid biosynthesis. Required for wild-type filamentous growth, cell growth, and cell-cell adhesion. In Saccharomyces cerevisiae (strain ATCC 204508 / S288c) (Baker's yeast), this protein is Protein PUN1 (PUN1).